The following is a 582-amino-acid chain: Multicopper oxidase LPR1 homolog 1 (582 aa).

A signal peptide spans 1–20 (MRAKVELAVLLLVLVGVAAG). Positions 150, 152, 198, and 200 each coordinate Cu cation. 3 N-linked (GlcNAc...) asparagine glycosylation sites follow: N256, N300, and N308. A Plastocyanin-like domain is found at 285–354 (PFLAVARRRY…DVVVDFSQST (70 aa)). The Cu cation site is built by H467, H470, and H472. N504 carries an N-linked (GlcNAc...) asparagine glycan. Cu cation is bound by residues H563, C564, H565, H569, and M574.

This sequence belongs to the multicopper oxidase family. The cofactor is Cu cation. As to expression, highly expressed in roots, and at lower levels in basal stems and leaf blades.

The protein resides in the endoplasmic reticulum membrane. In terms of biological role, multicopper oxidase that may play a role in the maintenance of inorganic phosphate homeostasis. The polypeptide is Multicopper oxidase LPR1 homolog 1 (Oryza sativa subsp. japonica (Rice)).